A 193-amino-acid polypeptide reads, in one-letter code: Copper-binding lipoprotein NosL (193 aa).

The first 19 residues, 1 to 19, serve as a signal peptide directing secretion; the sequence is MRTRLRFVLVAAALALLSA. Cys20 is lipidated: N-palmitoyl cysteine. Cys20 carries the S-diacylglycerol cysteine lipid modification.

This sequence belongs to the NosL family. In terms of assembly, monomer. Apo-NosL can form homodimers.

It is found in the cell membrane. In terms of biological role, may act as a metallochaperone involved in nitrous oxide reductase assembly. Specifically binds Cu(+). In Achromobacter cycloclastes, this protein is Copper-binding lipoprotein NosL.